The chain runs to 402 residues: Acetyl-CoA acetyltransferase (402 aa).

Cys-90 (acyl-thioester intermediate) is an active-site residue. CoA is bound by residues Tyr-185 and Lys-230. Tyr-185 provides a ligand contact to K(+). Residue Ala-250 participates in K(+) binding. Ser-251 contributes to the CoA binding site. Residue Val-348 participates in K(+) binding. Active-site proton acceptor residues include His-352 and Cys-382.

It belongs to the thiolase-like superfamily. Thiolase family. Homotetramer.

The protein resides in the cytoplasm. The protein localises to the cytosol. The enzyme catalyses 2 acetyl-CoA = acetoacetyl-CoA + CoA. The protein operates within metabolic intermediate biosynthesis; (R)-mevalonate biosynthesis; (R)-mevalonate from acetyl-CoA: step 1/3. Acetyl-CoA acetyltransferase; part of the first module of ergosterol biosynthesis pathway that includes the early steps of the pathway, conserved across all eukaryotes, and which results in the formation of mevalonate from acetyl-coenzyme A (acetyl-CoA). ERG10 catalyzes the formation of acetoacetyl-CoA from acetyl-CoA. The first module starts with the action of the cytosolic acetyl-CoA acetyltransferase ERG10 that catalyzes the formation of acetoacetyl-CoA. The hydroxymethylglutaryl-CoA synthase ERG13 then condenses acetyl-CoA with acetoacetyl-CoA to form HMG-CoA. The 3-hydroxy-3-methylglutaryl-coenzyme A (HMG-CoA) reductase HMG1 finally reduces HMG-CoA to produce mevalonate. This Candida albicans (strain SC5314 / ATCC MYA-2876) (Yeast) protein is Acetyl-CoA acetyltransferase.